The primary structure comprises 836 residues: Zinc fingers and homeoboxes protein 2 (836 aa).

A disordered region spans residues Met-1–Val-61. Over residues Thr-8 to Leu-19 the composition is skewed to polar residues. The segment at Ala-27–Gly-77 is interaction with EFNB1. The segment covering Glu-50–Val-61 has biased composition (basic and acidic residues). A Glycyl lysine isopeptide (Lys-Gly) (interchain with G-Cter in SUMO2) cross-link involves residue Lys-64. C2H2-type zinc fingers lie at residues Tyr-78–His-101 and Tyr-110–His-133. The interval Pro-164 to Gly-214 is disordered. Residues Leu-192–Gly-214 show a composition bias toward basic and acidic residues. A required for homodimerization region spans residues Asp-195 to Ser-358. 4 consecutive DNA-binding regions (homeobox) follow at residues Asn-263–Glu-324, Thr-439–Ile-501, Pro-530–Val-591, and Ser-628–Trp-690. The interval Asn-263–Lys-446 is required for repressor activity. The segment at Asn-263–Gly-497 is required for interaction with NFYA. Residues His-317–Lys-446 form a required for nuclear localization region. The interval Gly-404–Ser-442 is disordered. Lys-455 is covalently cross-linked (Glycyl lysine isopeptide (Lys-Gly) (interchain with G-Cter in SUMO2)). Composition is skewed to basic and acidic residues over residues Met-699–Ser-709, Tyr-730–Val-746, and Arg-813–Ser-824. Residues Met-699–Ala-836 form a disordered region. Phosphoserine is present on residues Ser-824 and Ser-826.

It belongs to the ZHX family. As to quaternary structure, homodimer (via homeobox domain 1). Heterodimer with ZHX1 (via homeobox domain 1). Heterodimer with ZHX3 (via homeobox domain 1). Heterodimerization with ZHX1 is not necessary for repressor activity. Interacts (via homeobox domain) with NFYA (via N-terminus). Interacts with EFNB1 intracellular domain peptide; the interaction enhances ZHX2 transcriptional repression activity. As to expression, expressed in retina where it localizes to Muller glial cells of the inner nuclear layer (at protein level). Detected in heart, brain, spleen, lung, liver, skeletal muscle, kidney and testis.

It localises to the nucleus. In terms of biological role, acts as a transcriptional repressor. Represses the promoter activity of the CDC25C gene stimulated by NFYA. May play a role in retinal development where it regulates the composition of bipolar cell populations, by promoting differentiation of bipolar OFF-type cells. In the brain, may promote maintenance and suppress differentiation of neural progenitor cells in the developing cortex. The chain is Zinc fingers and homeoboxes protein 2 (Zhx2) from Mus musculus (Mouse).